A 441-amino-acid polypeptide reads, in one-letter code: Serum response factor-binding protein 1 (441 aa).

Coiled coils occupy residues 52-77 (KGTE…AMKE) and 118-140 (LLKK…RQSA). Disordered stretches follow at residues 137–342 (RQSA…RNDK), 357–389 (FHSL…EPPV), and 406–441 (QTMQ…TFDD). Positions 139–152 (SAPAAESSESTSGE) are enriched in low complexity. The span at 153-183 (GRCKDIARSKDDARESQHPERTVVREQKAKD) shows a compositional bias: basic and acidic residues. Residue lysine 201 forms a Glycyl lysine isopeptide (Lys-Gly) (interchain with G-Cter in SUMO2) linkage. Serine 214 carries the phosphoserine modification. Polar residues predominate over residues 237-246 (DSNQGKASTK). The span at 269-282 (EKEYFDDSTEERFY) shows a compositional bias: basic and acidic residues. Serine 276, serine 291, and serine 293 each carry phosphoserine. Residues 308–321 (KESGVHSSAKELKP) are compositionally biased toward basic and acidic residues. Residue lysine 328 forms a Glycyl lysine isopeptide (Lys-Gly) (interchain with G-Cter in SUMO2) linkage. Basic and acidic residues predominate over residues 366-381 (SRRDPREQAPKNKAPD).

Interacts with SRF. Forms complexes with SRF and SRF cofactors ARID2, MYOCD and NKX2-5. Interacts with the N-terminus of SLC2A4. Highly expressed in heart, skeletal muscle, liver, kidney, testis and brain. Also expressed in white adipose tissue. Expression is up-regulated in cardiomyopathic heart.

It localises to the cytoplasm. The protein resides in the perinuclear region. Its function is as follows. May be involved in regulating transcriptional activation of cardiac genes during the aging process. May play a role in biosynthesis and/or processing of SLC2A4 in adipose cells. In Mus musculus (Mouse), this protein is Serum response factor-binding protein 1.